A 718-amino-acid polypeptide reads, in one-letter code: DNA ligase (718 aa).

Residues 44–48, 93–94, and E127 each bind NAD(+); these read DADYD and SL. K129 (N6-AMP-lysine intermediate) is an active-site residue. The NAD(+) site is built by R150, E186, K302, and K326. Positions 432, 435, 456, and 462 each coordinate Zn(2+). Positions 640–718 constitute a BRCT domain; it reads TAGSPVAGKT…EDEWLALISG (79 aa).

This sequence belongs to the NAD-dependent DNA ligase family. LigA subfamily. It depends on Mg(2+) as a cofactor. The cofactor is Mn(2+).

The enzyme catalyses NAD(+) + (deoxyribonucleotide)n-3'-hydroxyl + 5'-phospho-(deoxyribonucleotide)m = (deoxyribonucleotide)n+m + AMP + beta-nicotinamide D-nucleotide.. In terms of biological role, DNA ligase that catalyzes the formation of phosphodiester linkages between 5'-phosphoryl and 3'-hydroxyl groups in double-stranded DNA using NAD as a coenzyme and as the energy source for the reaction. It is essential for DNA replication and repair of damaged DNA. The protein is DNA ligase of Rhizobium etli (strain CIAT 652).